Consider the following 360-residue polypeptide: GTP 3',8-cyclase 2 (360 aa).

Residues 33-259 (TFGRVANDLR…PDPAPRGSAP (227 aa)) form the Radical SAM core domain. A GTP-binding site is contributed by Arg-42. Residues Cys-49 and Cys-53 each coordinate [4Fe-4S] cluster. Tyr-55 provides a ligand contact to S-adenosyl-L-methionine. Position 56 (Cys-56) interacts with [4Fe-4S] cluster. GTP is bound at residue Arg-93. Gly-97 is an S-adenosyl-L-methionine binding site. Thr-124 provides a ligand contact to GTP. Ser-148 contributes to the S-adenosyl-L-methionine binding site. GTP is bound at residue Lys-185. Met-219 lines the S-adenosyl-L-methionine pocket. Positions 287 and 290 each coordinate [4Fe-4S] cluster. 292-294 (RTR) provides a ligand contact to GTP. A [4Fe-4S] cluster-binding site is contributed by Cys-304.

It belongs to the radical SAM superfamily. MoaA family. Monomer and homodimer. It depends on [4Fe-4S] cluster as a cofactor.

It carries out the reaction GTP + AH2 + S-adenosyl-L-methionine = (8S)-3',8-cyclo-7,8-dihydroguanosine 5'-triphosphate + 5'-deoxyadenosine + L-methionine + A + H(+). Its pathway is cofactor biosynthesis; molybdopterin biosynthesis. Its function is as follows. Catalyzes the cyclization of GTP to (8S)-3',8-cyclo-7,8-dihydroguanosine 5'-triphosphate. The chain is GTP 3',8-cyclase 2 from Mycobacterium bovis (strain ATCC BAA-935 / AF2122/97).